The chain runs to 179 residues: MSAESAAIVQPIALIPATKTARQARIAALLTAQSVRSQAELAALLADDGVQVTQATLSRDLVELGAVRVRADGGLVYAVPQAGVDRTPHAAVSKEYLDARMTRLCAELLVTAEASANLVVLRTPPGAANFLAMAIDHSVLPDILGTIAGDDTVLVIARDPFGGAAIAERFLQFAEEPGT.

Belongs to the ArgR family.

It localises to the cytoplasm. The protein operates within amino-acid biosynthesis; L-arginine biosynthesis [regulation]. Regulates arginine biosynthesis genes. The protein is Arginine repressor of Renibacterium salmoninarum (strain ATCC 33209 / DSM 20767 / JCM 11484 / NBRC 15589 / NCIMB 2235).